Reading from the N-terminus, the 569-residue chain is Intraflagellar transport protein 74/72 (569 aa).

Coiled-coil stretches lie at residues 75-156 (ITAT…TRNE), 201-231 (YRSL…VAAN), and 271-298 (AITL…AESH).

This sequence belongs to the IFT74 family.

It is found in the cell projection. The protein localises to the cilium. The protein resides in the flagellum. It localises to the cytoplasm. Its subcellular location is the cytoskeleton. It is found in the flagellum axoneme. The protein localises to the flagellum basal body. Functionally, component of the intraflagellar transport complex B (IFT-B) involved in flagellar assembly. The protein is Intraflagellar transport protein 74/72 of Giardia intestinalis (strain ATCC 50803 / WB clone C6) (Giardia lamblia).